Reading from the N-terminus, the 882-residue chain is Dual specificity tyrosine-phosphorylation-regulated kinase mbk-1 (882 aa).

Residues 1 to 42 (MNTADVPDNLQSWGQQPSSSYSNTQQHSQMTNLPPINHNNLC) show a composition bias toward polar residues. Disordered regions lie at residues 1–45 (MNTA…CDTE), 62–81 (QKQQ…AQRF), 212–239 (KQVR…ASLT), and 255–308 (NHYQ…NGYD). Over residues 64–79 (QQKQQEQQHIQQQNAQ) the composition is skewed to low complexity. Basic and acidic residues predominate over residues 220 to 231 (KSQDAGKPKGSK). Residues 290–308 (QQQQRQKSSRGGPYNNGYD) are compositionally biased toward low complexity. A Protein kinase domain is found at 328-649 (ILSDTPVGKG…PYYVVRHPFL (322 aa)). Residues 334–342 (VGKGSFGQV) and Lys357 contribute to the ATP site. Asp456 functions as the Proton acceptor in the catalytic mechanism. Disordered stretches follow at residues 742–761 (HNPN…QYQQ) and 789–882 (QQQQ…NNKL). 2 stretches are compositionally biased toward low complexity: residues 747–761 (QYSQ…QYQQ) and 789–810 (QQQQ…QHLQ). The span at 816–827 (RQQDQNEWRNQF) shows a compositional bias: basic and acidic residues. Residues 843 to 869 (SVSNQISRNQFNPQQVSMTHGNVNANN) show a composition bias toward polar residues.

It belongs to the protein kinase superfamily. CMGC Ser/Thr protein kinase family. MNB/DYRK subfamily. Requires Mg(2+) as cofactor. In terms of tissue distribution, expressed in all somatic cells.

The protein localises to the nucleus. It catalyses the reaction L-seryl-[protein] + ATP = O-phospho-L-seryl-[protein] + ADP + H(+). It carries out the reaction L-threonyl-[protein] + ATP = O-phospho-L-threonyl-[protein] + ADP + H(+). The catalysed reaction is L-tyrosyl-[protein] + ATP = O-phospho-L-tyrosyl-[protein] + ADP + H(+). Its function is as follows. Possible role in the function of olfactory neurons. The protein is Dual specificity tyrosine-phosphorylation-regulated kinase mbk-1 of Caenorhabditis elegans.